The primary structure comprises 998 residues: Ephrin type-B receptor 3 (998 aa).

An N-terminal signal peptide occupies residues 1-33; it reads MARARPPPPPSPPPGLLPLLPPLLLLPLLLLPA. Over 34-559 the chain is Extracellular; that stretch reads GCRALEETLM…AQQLQEQLPL (526 aa). The 179-residue stretch at 39–217 folds into the Eph LBD domain; the sequence is EETLMDTKWV…FYKKCASTTA (179 aa). Cys-81 and Cys-199 are disulfide-bonded. Fibronectin type-III domains lie at 339 to 451 and 452 to 545; these read VPSP…TNQA and APSE…TTSE. Asn-351 and Asn-445 each carry an N-linked (GlcNAc...) asparagine glycan. Residues 560–580 form a helical membrane-spanning segment; it reads IVGSATAGLVFVVAVVVIAIV. Residues 581–998 lie on the Cytoplasmic side of the membrane; the sequence is CLRKQRHGSD…QMNQTLPVQV (418 aa). Tyr-614 bears the Phosphotyrosine; by autocatalysis mark. One can recognise a Protein kinase domain in the interval 633–896; sequence VKIEEVIGAG…QIVNTLDKLI (264 aa). ATP contacts are provided by residues 639-647 and Lys-665; that span reads IGAGEFGEV. The active-site Proton acceptor is Asp-758. Residues 925–989 enclose the SAM domain; it reads TTFTTVGDWL…LSSIQDMRLQ (65 aa). The short motif at 996–998 is the PDZ-binding element; sequence VQV.

This sequence belongs to the protein kinase superfamily. Tyr protein kinase family. Ephrin receptor subfamily. Heterotetramer upon binding of the ligand. The heterotetramer is composed of an ephrin dimer and a receptor dimer. Oligomerization is probably required to induce biological responses. Phosphorylated. Autophosphorylates upon ligand-binding. Autophosphorylation on Tyr-614 is required for interaction with SH2 domain-containing proteins. In terms of processing, ubiquitinated by RNF186, mainly through 'Lys-48' and 'Lys-63'-linked polyubiquitin chains. Ubiquitous.

The protein localises to the cell membrane. It localises to the cell projection. It is found in the dendrite. It carries out the reaction L-tyrosyl-[protein] + ATP = O-phospho-L-tyrosyl-[protein] + ADP + H(+). In terms of biological role, receptor tyrosine kinase which binds promiscuously transmembrane ephrin-B family ligands residing on adjacent cells, leading to contact-dependent bidirectional signaling into neighboring cells. The signaling pathway downstream of the receptor is referred to as forward signaling while the signaling pathway downstream of the ephrin ligand is referred to as reverse signaling. Generally has an overlapping and redundant function with EPHB2. Like EPHB2, functions in axon guidance during development regulating for instance the neurons forming the corpus callosum and the anterior commissure, 2 major interhemispheric connections between the temporal lobes of the cerebral cortex. In addition to its role in axon guidance also plays an important redundant role with other ephrin-B receptors in development and maturation of dendritic spines and the formation of excitatory synapses. Controls other aspects of development through regulation of cell migration and positioning. This includes angiogenesis, palate development and thymic epithelium development for instance. Forward and reverse signaling through the EFNB2/EPHB3 complex also regulate migration and adhesion of cells that tubularize the urethra and septate the cloaca. Finally, plays an important role in intestinal epithelium differentiation segregating progenitor from differentiated cells in the crypt. The polypeptide is Ephrin type-B receptor 3 (EPHB3) (Homo sapiens (Human)).